The following is a 336-amino-acid chain: Dihydroorotate dehydrogenase (quinone) (336 aa).

Residues 62–66 and Thr-86 contribute to the FMN site; that span reads AGLDK. Lys-66 is a substrate binding site. 111–115 provides a ligand contact to substrate; it reads NRMGF. Residues Asn-139 and Asn-172 each contribute to the FMN site. Residue Asn-172 coordinates substrate. The Nucleophile role is filled by Ser-175. Asn-177 contacts substrate. Residues Lys-217 and Thr-245 each coordinate FMN. Position 246–247 (246–247) interacts with substrate; sequence NT. FMN is bound by residues Gly-268, Gly-297, and 318–319; that span reads YS.

This sequence belongs to the dihydroorotate dehydrogenase family. Type 2 subfamily. Monomer. Requires FMN as cofactor.

Its subcellular location is the cell membrane. The catalysed reaction is (S)-dihydroorotate + a quinone = orotate + a quinol. The protein operates within pyrimidine metabolism; UMP biosynthesis via de novo pathway; orotate from (S)-dihydroorotate (quinone route): step 1/1. In terms of biological role, catalyzes the conversion of dihydroorotate to orotate with quinone as electron acceptor. In Escherichia fergusonii (strain ATCC 35469 / DSM 13698 / CCUG 18766 / IAM 14443 / JCM 21226 / LMG 7866 / NBRC 102419 / NCTC 12128 / CDC 0568-73), this protein is Dihydroorotate dehydrogenase (quinone).